The primary structure comprises 399 residues: Elongation factor Tu (399 aa).

A tr-type G domain is found at 10–204 (KPHVNIGTIG…AVDEAIPEPE (195 aa)). A G1 region spans residues 19-26 (GHVDHGKT). A GTP-binding site is contributed by 19-26 (GHVDHGKT). Thr-26 contacts Mg(2+). A G2 region spans residues 60 to 64 (GITIN). A G3 region spans residues 81 to 84 (DCPG). Residues 81-85 (DCPGH) and 136-139 (NKCD) each bind GTP. A G4 region spans residues 136 to 139 (NKCD). A G5 region spans residues 174–176 (SGL).

This sequence belongs to the TRAFAC class translation factor GTPase superfamily. Classic translation factor GTPase family. EF-Tu/EF-1A subfamily. As to quaternary structure, monomer.

Its subcellular location is the cytoplasm. It catalyses the reaction GTP + H2O = GDP + phosphate + H(+). Its function is as follows. GTP hydrolase that promotes the GTP-dependent binding of aminoacyl-tRNA to the A-site of ribosomes during protein biosynthesis. This chain is Elongation factor Tu, found in Parasynechococcus marenigrum (strain WH8102).